Here is a 581-residue protein sequence, read N- to C-terminus: Arginine--tRNA ligase (581 aa).

The 'HIGH' region motif lies at 126–136 (PNLAKEMHVGH).

Belongs to the class-I aminoacyl-tRNA synthetase family. In terms of assembly, monomer.

It is found in the cytoplasm. It catalyses the reaction tRNA(Arg) + L-arginine + ATP = L-arginyl-tRNA(Arg) + AMP + diphosphate. The polypeptide is Arginine--tRNA ligase (Shewanella oneidensis (strain ATCC 700550 / JCM 31522 / CIP 106686 / LMG 19005 / NCIMB 14063 / MR-1)).